A 321-amino-acid polypeptide reads, in one-letter code: Serpentine receptor class delta-63 (321 aa).

7 consecutive transmembrane segments (helical) span residues 14 to 34 (LVYMICLMLYITMYILIYNFT), 41 to 61 (VKYFLYPSCTAMLIAMTMAFA), 83 to 103 (YIGPTFCFYCYNLYTAFGIVV), 128 to 148 (LWTLVFMWHYLCPLIYLIVII), 190 to 208 (AAMSLSLISMYYPLIGTYW), 240 to 260 (NFQILLPMLRYIPLTAIYFMI), and 273 to 293 (TITVLGTIPCILDPLVQIYFI).

It belongs to the nematode receptor-like protein srd family.

It localises to the membrane. This is Serpentine receptor class delta-63 (srd-63) from Caenorhabditis elegans.